Reading from the N-terminus, the 385-residue chain is Telomere-binding protein subunit beta (385 aa).

Disordered stretches follow at residues 231–329 and 343–385; these read AADH…ALTT and WHEK…AAKK. Basic residues predominate over residues 242-262; that stretch reads GGAKGKGKAAAKAAKGKKLSA. Basic and acidic residues predominate over residues 263–280; sequence KKGDSSAADVRKSVDKIV. Composition is skewed to low complexity over residues 295–304, 312–326, and 365–375; these read KSQAPAAGKS, KAVP…KKSA, and GKASATSGKAS. A compositionally biased stretch (basic residues) spans 376–385; the sequence is KASKKTAAKK.

Heterodimer of an alpha and a beta subunit.

The protein localises to the nucleus. It is found in the chromosome. Its subcellular location is the telomere. In terms of biological role, may function as protective capping of the single-stranded telomeric overhang. May also participate in telomere length regulation during DNA replication. Binds specifically to the T4G4-containing extension on the 3'strand and protects this region of the telomere from nuclease digestion and chemical modification. This Sterkiella nova (Ciliate) protein is Telomere-binding protein subunit beta (MAC-41A).